The sequence spans 236 residues: 2,3,4,5-tetrahydropyridine-2,6-dicarboxylate N-acetyltransferase (236 aa).

It belongs to the transferase hexapeptide repeat family. DapH subfamily.

It catalyses the reaction (S)-2,3,4,5-tetrahydrodipicolinate + acetyl-CoA + H2O = L-2-acetamido-6-oxoheptanedioate + CoA. It functions in the pathway amino-acid biosynthesis; L-lysine biosynthesis via DAP pathway; LL-2,6-diaminopimelate from (S)-tetrahydrodipicolinate (acetylase route): step 1/3. Its function is as follows. Catalyzes the transfer of an acetyl group from acetyl-CoA to tetrahydrodipicolinate. The sequence is that of 2,3,4,5-tetrahydropyridine-2,6-dicarboxylate N-acetyltransferase from Clostridium botulinum (strain 657 / Type Ba4).